The following is a 156-amino-acid chain: Small ribosomal subunit protein uS7 (156 aa).

The protein belongs to the universal ribosomal protein uS7 family. In terms of assembly, part of the 30S ribosomal subunit. Contacts proteins S9 and S11.

Functionally, one of the primary rRNA binding proteins, it binds directly to 16S rRNA where it nucleates assembly of the head domain of the 30S subunit. Is located at the subunit interface close to the decoding center, probably blocks exit of the E-site tRNA. This chain is Small ribosomal subunit protein uS7, found in Pediococcus pentosaceus (strain ATCC 25745 / CCUG 21536 / LMG 10740 / 183-1w).